The chain runs to 393 residues: Na(+)/H(+) antiporter NhaA (393 aa).

The next 11 helical transmembrane spans lie at 14–34, 60–80, 96–116, 125–145, 155–175, 179–199, 218–238, 263–283, 292–312, 330–350, and 362–382; these read AAGM…NWSV, LLLW…GLEV, MLPL…FLLF, AGWA…LTLL, VFLL…IALF, QVFW…AYMN, VCIL…GFFI, FLIV…GIVL, LGIA…FSWL, IVAV…ITLL, and YAKL…YLAL.

This sequence belongs to the NhaA Na(+)/H(+) (TC 2.A.33) antiporter family.

It is found in the cell inner membrane. It catalyses the reaction Na(+)(in) + 2 H(+)(out) = Na(+)(out) + 2 H(+)(in). Functionally, na(+)/H(+) antiporter that extrudes sodium in exchange for external protons. This Pectobacterium atrosepticum (strain SCRI 1043 / ATCC BAA-672) (Erwinia carotovora subsp. atroseptica) protein is Na(+)/H(+) antiporter NhaA.